The following is a 138-amino-acid chain: Basic phospholipase A2 vurtoxin (138 aa).

The first 16 residues, 1–16, serve as a signal peptide directing secretion; that stretch reads MRTLWIVAVCLIGVEG. 7 disulfides stabilise this stretch: C42/C131, C44/C60, C59/C111, C65/C138, C66/C104, C73/C97, and C91/C102. 3 residues coordinate Ca(2+): Y43, G45, and G47. H63 is an active-site residue. D64 is a Ca(2+) binding site. D105 is an active-site residue.

Requires Ca(2+) as cofactor. Expressed by the venom gland.

The protein localises to the secreted. It catalyses the reaction a 1,2-diacyl-sn-glycero-3-phosphocholine + H2O = a 1-acyl-sn-glycero-3-phosphocholine + a fatty acid + H(+). In terms of biological role, snake venom phospholipase A2 that may have a strong anticoagulant activity. Is able to suppress the acetylcholine (ACh)-evoked current mediated by alpha-7 (CHRNA7)-similar nAChRs in L.stagnalis neurons (IC(50)=10.5 uM) and to compete with alpha-bungarotoxin for binding to muscle- and alpha-7 neuronal nAChR types, as well as to AChBPs. In inhibition of alpha-bungarotoxin binding, this toxin is mostly active against T.californica nAChR (IC(50)=0.26 uM), it is moderately active against human alpha-7 nAChR (IC(50)=14 uM), and is not active against L.stagnalis and A.californica AChBP (IC(50)&gt;30 uM). In Vipera renardi (Steppe viper), this protein is Basic phospholipase A2 vurtoxin.